We begin with the raw amino-acid sequence, 412 residues long: Phosphoglycerate kinase (412 aa).

Substrate-binding positions include 26–28 (DFN), Arg42, 65–68 (HLGR), Arg133, and Arg166. ATP contacts are provided by residues Lys217, Gly308, Glu339, and 368 to 371 (GGDS).

This sequence belongs to the phosphoglycerate kinase family. As to quaternary structure, monomer.

The protein localises to the cytoplasm. The enzyme catalyses (2R)-3-phosphoglycerate + ATP = (2R)-3-phospho-glyceroyl phosphate + ADP. It participates in carbohydrate degradation; glycolysis; pyruvate from D-glyceraldehyde 3-phosphate: step 2/5. This Synechococcus sp. (strain JA-2-3B'a(2-13)) (Cyanobacteria bacterium Yellowstone B-Prime) protein is Phosphoglycerate kinase.